A 385-amino-acid chain; its full sequence is Signal transduction histidine-protein kinase/phosphatase DegS (385 aa).

The stretch at 31 to 141 forms a coiled coil; that stretch reads QIGEQSRQQY…IERSESLVSQ (111 aa). S76 is subject to Phosphoserine. Residues 183–385 form the Histidine kinase domain; the sequence is RVSREIHDGP…FIMIKVPLSL (203 aa). Phosphohistidine; by autocatalysis is present on H189.

Post-translationally, autophosphorylated. Phosphorylated in vitro at Ser-76 by the serine/threonine-protein kinase YbdM, which stimulates the phosphate transfer to DegU.

Its subcellular location is the cytoplasm. The enzyme catalyses ATP + protein L-histidine = ADP + protein N-phospho-L-histidine.. Its activity is regulated as follows. Regulated via serine phosphorylation of its input domain. Phosphotransfer from DegS to DegU is stimulated by phosphorylation on Ser-76 and by DegQ. Functionally, member of the two-component regulatory system DegS/DegU, which plays an important role in the transition growth phase. Involved in the control of expression of different cellular functions, including production of degradative enzymes such as the neutral and alkaline proteases, flagellum formation and biofilm formation. Acts both as a protein kinase that undergoes autophosphorylation and subsequently transfers the phosphate to DegU, and as a protein phosphatase that dephosphorylates phospho-DegU. In Bacillus subtilis (strain 168), this protein is Signal transduction histidine-protein kinase/phosphatase DegS (degS).